The primary structure comprises 425 residues: Serine--tRNA ligase (425 aa).

Threonine 230–glutamate 232 is a binding site for L-serine. An ATP-binding site is contributed by arginine 261–glutamate 263. Glutamate 284 is an L-serine binding site. Glutamate 348–serine 351 is an ATP binding site. Serine 384 provides a ligand contact to L-serine.

It belongs to the class-II aminoacyl-tRNA synthetase family. Type-1 seryl-tRNA synthetase subfamily. Homodimer. The tRNA molecule binds across the dimer.

Its subcellular location is the cytoplasm. The enzyme catalyses tRNA(Ser) + L-serine + ATP = L-seryl-tRNA(Ser) + AMP + diphosphate + H(+). The catalysed reaction is tRNA(Sec) + L-serine + ATP = L-seryl-tRNA(Sec) + AMP + diphosphate + H(+). It participates in aminoacyl-tRNA biosynthesis; selenocysteinyl-tRNA(Sec) biosynthesis; L-seryl-tRNA(Sec) from L-serine and tRNA(Sec): step 1/1. Its function is as follows. Catalyzes the attachment of serine to tRNA(Ser). Is also able to aminoacylate tRNA(Sec) with serine, to form the misacylated tRNA L-seryl-tRNA(Sec), which will be further converted into selenocysteinyl-tRNA(Sec). The polypeptide is Serine--tRNA ligase (Streptococcus gordonii (strain Challis / ATCC 35105 / BCRC 15272 / CH1 / DL1 / V288)).